The primary structure comprises 153 residues: MTTEKKSLGIQEIMDLLPHRYPFLMVDRVDDYEISDERKTLRAIKNVSFNEPIFQGHFPAKPVFPGVLILEAMAQATGILAFTMVGKPSPNELYYFASIDNARFKRPVGPGDQLVLDVEFLKERRGIAKFTGVATVNGEVVCTAELMCAKREV.

H57 is an active-site residue.

This sequence belongs to the thioester dehydratase family. FabZ subfamily.

The protein localises to the cytoplasm. The enzyme catalyses a (3R)-hydroxyacyl-[ACP] = a (2E)-enoyl-[ACP] + H2O. Involved in unsaturated fatty acids biosynthesis. Catalyzes the dehydration of short chain beta-hydroxyacyl-ACPs and long chain saturated and unsaturated beta-hydroxyacyl-ACPs. The polypeptide is 3-hydroxyacyl-[acyl-carrier-protein] dehydratase FabZ (Aeromonas salmonicida (strain A449)).